A 504-amino-acid chain; its full sequence is MNIKPEEITSIIKKEIEKYEKQIKTVDSGTIIQVGDGVSRVYGLDDCMEGELLEFPNDVYGMALNLEQDNVGCVLLGNEEGIKEGDIVKGSGKIVEVPVGEALIGRVVNSLGEELDGKGPINTNQTRPIEVKAPSIIDRSSVNEPLQTGIKAIDSMIPIGKGQRELIIGDRQTGKTALVIDTILNQKGKDVICIYVAIGQKQSTVAHIVNTLTEMGAMDYSIIVSSTAADSAPLQYLAPYAGCSIGEYFMNQGKDVLIVYDDLSKHAVAYRTMSLLLRRPPGREAYPGDVFYIHSRLLERAAKLSKENGGGSLTALPIIETLAGDITAYIPTNVISITDGQIFLESDLFNSGQRPAVNAGISVSRVGGNAQIKAMKQVTGTLRLELAQYRELAAFAQFGSDLDKDSKKRLEKGKRLVEILKQDQYKPLEVEKQVIILYTAVNDFLSDIKVEDIKKFEKELLEYVDTHYRELGRQIAEEKVLTDEIKAKLEVAIVEFKKIFLQEA.

Gly169 to Thr176 serves as a coordination point for ATP.

Belongs to the ATPase alpha/beta chains family. As to quaternary structure, F-type ATPases have 2 components, CF(1) - the catalytic core - and CF(0) - the membrane proton channel. CF(1) has five subunits: alpha(3), beta(3), gamma(1), delta(1), epsilon(1). CF(0) has three main subunits: a(1), b(2) and c(9-12). The alpha and beta chains form an alternating ring which encloses part of the gamma chain. CF(1) is attached to CF(0) by a central stalk formed by the gamma and epsilon chains, while a peripheral stalk is formed by the delta and b chains.

It localises to the cell membrane. The catalysed reaction is ATP + H2O + 4 H(+)(in) = ADP + phosphate + 5 H(+)(out). Functionally, produces ATP from ADP in the presence of a proton gradient across the membrane. The alpha chain is a regulatory subunit. In Clostridium botulinum (strain Eklund 17B / Type B), this protein is ATP synthase subunit alpha.